We begin with the raw amino-acid sequence, 317 residues long: Terpene synthase 3 (317 aa).

A DDxx(x)D/E motif motif is present at residues Asp96 to Glu101. The short motif at Asn223–Glu231 is the NDxxSxxxD/E motif element.

This sequence belongs to the terpene synthase family.

Terpene synthase that converts its substrate farnesyl diphosphate (FPP) into the sesquiterpene CAS 137235-51-9 as a major product. Is also able to convert FPP into 9-epi-(E)-caryophyllene, alpha-neoclovene, beta-neoclovene, and 3 yet unidentified sesquiterpenes. This chain is Terpene synthase 3, found in Dictyostelium purpureum (Slime mold).